The following is a 328-amino-acid chain: Ribosomal RNA large subunit methyltransferase F (328 aa).

Positions 1–31 (MTDTRKPPRKKPQRPAKPAAPREKATLHPRN) are disordered.

The protein belongs to the methyltransferase superfamily. METTL16/RlmF family.

The protein resides in the cytoplasm. It carries out the reaction adenosine(1618) in 23S rRNA + S-adenosyl-L-methionine = N(6)-methyladenosine(1618) in 23S rRNA + S-adenosyl-L-homocysteine + H(+). Functionally, specifically methylates the adenine in position 1618 of 23S rRNA. In Pseudomonas syringae pv. syringae (strain B728a), this protein is Ribosomal RNA large subunit methyltransferase F.